The sequence spans 551 residues: HTH-type transcriptional regulator SgrR (551 aa).

Residues 1–116 (MPSARLQQQF…LVSHLGRSFR (116 aa)) form the HTH marR-type domain. The segment at residues 26-49 (LNELAALLSCSRRHMRTLLNTMQD) is a DNA-binding region (H-T-H motif). Residues 163–492 (ELEADIAHHW…IDWQADAARW (330 aa)) are solute-binding.

In terms of biological role, activates the small RNA gene sgrS under glucose-phosphate stress conditions as well as yfdZ. Represses its own transcription under both stress and non-stress conditions. Might act as a sensor of the intracellular accumulation of phosphoglucose by binding these molecules in its C-terminal solute-binding domain. This is HTH-type transcriptional regulator SgrR from Shigella boydii serotype 4 (strain Sb227).